A 330-amino-acid chain; its full sequence is Flotillin-like protein FloA (330 aa).

Helical transmembrane passes span 5–25 (FLPL…FYYV) and 27–47 (FLLW…QLFL).

Belongs to the flotillin-like FloA family. In terms of assembly, homooligomerizes.

The protein resides in the cell membrane. The protein localises to the membrane raft. Its function is as follows. Found in functional membrane microdomains (FMM) that may be equivalent to eukaryotic membrane rafts. FMMs are highly dynamic and increase in number as cells age. Flotillins are thought to be important factors in membrane fluidity. The protein is Flotillin-like protein FloA of Parabacteroides distasonis (strain ATCC 8503 / DSM 20701 / CIP 104284 / JCM 5825 / NCTC 11152).